The following is a 72-amino-acid chain: Translation initiation factor IF-1 (72 aa).

Residues 1 to 72 form the S1-like domain; sequence MAKDDVIEVE…TRGRITYRYK (72 aa). Phosphotyrosine is present on Y60.

Belongs to the IF-1 family. In terms of assembly, component of the 30S ribosomal translation pre-initiation complex which assembles on the 30S ribosome in the order IF-2 and IF-3, IF-1 and N-formylmethionyl-tRNA(fMet); mRNA recruitment can occur at any time during PIC assembly.

The protein localises to the cytoplasm. Its function is as follows. One of the essential components for the initiation of protein synthesis. Stabilizes the binding of IF-2 and IF-3 on the 30S subunit to which N-formylmethionyl-tRNA(fMet) subsequently binds. Helps modulate mRNA selection, yielding the 30S pre-initiation complex (PIC). Upon addition of the 50S ribosomal subunit IF-1, IF-2 and IF-3 are released leaving the mature 70S translation initiation complex. The sequence is that of Translation initiation factor IF-1 from Bacillus pumilus (strain SAFR-032).